A 392-amino-acid chain; its full sequence is Heat-inducible transcription repressor HrcA (392 aa).

Belongs to the HrcA family.

In terms of biological role, negative regulator of class I heat shock genes (grpE-dnaK-dnaJ and groELS operons). Prevents heat-shock induction of these operons. The polypeptide is Heat-inducible transcription repressor HrcA (Synechococcus sp. (strain JA-3-3Ab) (Cyanobacteria bacterium Yellowstone A-Prime)).